The primary structure comprises 517 residues: Maturase K (517 aa).

This sequence belongs to the intron maturase 2 family. MatK subfamily.

It is found in the plastid. Its subcellular location is the chloroplast. Usually encoded in the trnK tRNA gene intron. Probably assists in splicing its own and other chloroplast group II introns. The protein is Maturase K of Juncus effusus (Soft rush).